A 145-amino-acid chain; its full sequence is Hemoglobin subunit beta-2 (145 aa).

Positions 2–145 (HLTDQEIKYI…VADAVGKGYH (144 aa)) constitute a Globin domain. Heme b-binding residues include His63 and His91.

It belongs to the globin family. Red blood cells.

The sequence is that of Hemoglobin subunit beta-2 from Telmatobius peruvianus (Andean frog).